The following is a 344-amino-acid chain: Phosphoribosylformylglycinamidine cyclo-ligase (344 aa).

The protein belongs to the AIR synthase family.

Its subcellular location is the cytoplasm. The enzyme catalyses 2-formamido-N(1)-(5-O-phospho-beta-D-ribosyl)acetamidine + ATP = 5-amino-1-(5-phospho-beta-D-ribosyl)imidazole + ADP + phosphate + H(+). It participates in purine metabolism; IMP biosynthesis via de novo pathway; 5-amino-1-(5-phospho-D-ribosyl)imidazole from N(2)-formyl-N(1)-(5-phospho-D-ribosyl)glycinamide: step 2/2. In Laribacter hongkongensis (strain HLHK9), this protein is Phosphoribosylformylglycinamidine cyclo-ligase.